Here is a 103-residue protein sequence, read N- to C-terminus: Stefin-2 (103 aa).

Positions 52–56 (QVVQG) match the Secondary area of contact motif.

The protein belongs to the cystatin family.

Its subcellular location is the cytoplasm. Its function is as follows. This is an intracellular thiol proteinase inhibitor. The chain is Stefin-2 (Stfa2) from Mus musculus (Mouse).